The following is a 516-amino-acid chain: Katanin p60 ATPase-containing subunit A1 (516 aa).

The tract at residues 75–212 (GFKSEPAAPE…DEKKFDPAGY (138 aa)) is disordered. 2 stretches are compositionally biased toward basic and acidic residues: residues 133–143 (ARKDPPRRSEP) and 155–167 (RGGR…RGDA). A compositionally biased stretch (gly residues) spans 168–178 (RSGGGGRGGAR). The segment covering 179-212 (GSDKDKNRGGKSDKDKKAPSGEEGDEKKFDPAGY) has biased composition (basic and acidic residues). 274–281 (GPPGTGKT) contributes to the ATP binding site.

It belongs to the AAA ATPase family. Katanin p60 subunit A1 subfamily. Can homooligomerize into hexameric rings, which may be promoted by interaction with microtubules. Interacts with KATNB1, which may serve as a targeting subunit.

The protein localises to the cytoplasm. It localises to the cytoskeleton. Its subcellular location is the microtubule organizing center. The protein resides in the centrosome. It is found in the spindle pole. The enzyme catalyses n ATP + n H2O + a microtubule = n ADP + n phosphate + (n+1) alpha/beta tubulin heterodimers.. With respect to regulation, ATPase activity is stimulated by microtubules, which promote homooligomerization. ATP-dependent microtubule severing is stimulated by interaction with KATNB1. Its function is as follows. Catalytic subunit of a complex which severs microtubules in an ATP-dependent manner. Microtubule severing may promote rapid reorganization of cellular microtubule arrays and the release of microtubules from the centrosome following nucleation. In mitotic spindles this could allow depolymerization of the microtubule end proximal to the centrosome, and subsequent poleward microtubule flux. This chain is Katanin p60 ATPase-containing subunit A1, found in Strongylocentrotus purpuratus (Purple sea urchin).